A 134-amino-acid polypeptide reads, in one-letter code: Small ribosomal subunit protein uS9 (134 aa).

The segment at 114–134 (EVERKKYGLKKARRAPQFSKR) is disordered. Basic residues predominate over residues 120 to 134 (YGLKKARRAPQFSKR).

This sequence belongs to the universal ribosomal protein uS9 family.

The polypeptide is Small ribosomal subunit protein uS9 (Thermotoga neapolitana (strain ATCC 49049 / DSM 4359 / NBRC 107923 / NS-E)).